Reading from the N-terminus, the 180-residue chain is Outer membrane protein YfaZ (180 aa).

Positions 1–21 (MKKIALAGLAGMLLVSASVNA) are cleaved as a signal peptide.

The protein resides in the cell outer membrane. This chain is Outer membrane protein YfaZ (yfaZ), found in Escherichia coli (strain K12).